The following is a 794-amino-acid chain: Ubiquitin carboxyl-terminal hydrolase 10 (794 aa).

At alanine 2 the chain carries N-acetylalanine. The tract at residues 2 to 99 (ALHNPQYIFG…ILGCPTSKKT (98 aa)) is interaction with p53/TP53. The G3BP1-binding stretch occupies residues 6–21 (PQYIFGDFSPDEFNQF). Phosphothreonine is present on residues threonine 24 and threonine 99. The interval 123–164 (ESSSNAEAETLENDSGAGGLGQRERKKKKKRPPGYYSYLKDG) is disordered. Serine 209, serine 224, and serine 316 each carry phosphoserine. The disordered stretch occupies residues 303 to 326 (ESADLDPAKPESQSPPAESALSVS). A compositionally biased stretch (polar residues) spans 313–326 (ESQSPPAESALSVS). Serine 332 is modified (phosphoserine; by ATM). A phosphoserine mark is found at serine 361 and serine 366. The USP domain maps to 411–791 (RGLINKGNWC…TAYLLYYRRV (381 aa)). Cysteine 420 serves as the catalytic Nucleophile. At serine 543 the chain carries Phosphoserine. The tract at residues 546 to 588 (HEKHSVSNGPGSHLIEDEELEDTGEGSEDEWEQVGPKNKTSVT) is disordered. Residues 561–577 (EDEELEDTGEGSEDEWE) are compositionally biased toward acidic residues. Phosphothreonine is present on threonine 568. At serine 572 the chain carries Phosphoserine. Histidine 745 functions as the Proton acceptor in the catalytic mechanism.

This sequence belongs to the peptidase C19 family. USP10 subfamily. Found in a deubiquitination complex with TANK, USP10 and ZC3H12A; this complex inhibits genotoxic stress- or interleukin-1-beta (IL1B)-mediated NF-kappa-B activation by promoting IKBKG or TRAF6 deubiquitination. Interacts with IKBKG; this interaction increases in response to DNA damage. Interacts with TANK; this interaction increases in response to DNA damage. Interacts with TRAF6; this interaction increases in response to DNA damage. Interacts with ZC3H12A; this interaction increases in response to DNA damage. Interacts with G3BP1 (via NTF2 domain) and G3BP2 (via NTF2 domain); inhibiting stress granule formation. In terms of processing, phosphorylated by ATM following DNA damage, leading to stabilization and translocation it to the nucleus. Ubiquitinated. Deubiquitinated by USP13.

The protein resides in the cytoplasm. The protein localises to the nucleus. Its subcellular location is the early endosome. The catalysed reaction is Thiol-dependent hydrolysis of ester, thioester, amide, peptide and isopeptide bonds formed by the C-terminal Gly of ubiquitin (a 76-residue protein attached to proteins as an intracellular targeting signal).. Its activity is regulated as follows. Specifically inhibited by spautin-1 (specific and potent autophagy inhibitor-1), a derivative of MBCQ that binds to USP10 and inhibits deubiquitinase activity. Regulated by PIK3C3/VPS34-containing complexes. Hydrolase that can remove conjugated ubiquitin from target proteins such as p53/TP53, RPS2/us5, RPS3/us3, RPS10/eS10, BECN1, SNX3 and CFTR. Acts as an essential regulator of p53/TP53 stability: in unstressed cells, specifically deubiquitinates p53/TP53 in the cytoplasm, leading to counteract MDM2 action and stabilize p53/TP53. Following DNA damage, translocates to the nucleus and deubiquitinates p53/TP53, leading to regulate the p53/TP53-dependent DNA damage response. Component of a regulatory loop that controls autophagy and p53/TP53 levels: mediates deubiquitination of BECN1, a key regulator of autophagy, leading to stabilize the PIK3C3/VPS34-containing complexes. In turn, PIK3C3/VPS34-containing complexes regulate USP10 stability, suggesting the existence of a regulatory system by which PIK3C3/VPS34-containing complexes regulate p53/TP53 protein levels via USP10 and USP13. Does not deubiquitinate MDM2. Plays a key role in 40S ribosome subunit recycling when a ribosome has stalled during translation: acts both by inhibiting formation of stress granules, which store stalled translation pre-initiation complexes, and mediating deubiquitination of 40S ribosome subunits. Acts as a negative regulator of stress granules formation by lowering G3BP1 and G3BP2 valence, thereby preventing G3BP1 and G3BP2 ability to undergo liquid-liquid phase separation (LLPS) and assembly of stress granules. Promotes 40S ribosome subunit recycling following ribosome dissociation in response to ribosome stalling by mediating deubiquitination of 40S ribosomal proteins RPS2/us5, RPS3/us3 and RPS10/eS10, thereby preventing their degradation by the proteasome. Part of a ribosome quality control that takes place when ribosomes have stalled during translation initiation (iRQC): USP10 acts by removing monoubiquitination of RPS2/us5 and RPS3/us3, promoting 40S ribosomal subunit recycling. Deubiquitinates CFTR in early endosomes, enhancing its endocytic recycling. Involved in a TANK-dependent negative feedback response to attenuate NF-kappa-B activation via deubiquitinating IKBKG or TRAF6 in response to interleukin-1-beta (IL1B) stimulation or upon DNA damage. Deubiquitinates TBX21 leading to its stabilization. Plays a negative role in the RLR signaling pathway upon RNA virus infection by blocking the RIGI-mediated MAVS activation. Mechanistically, removes the unanchored 'Lys-63'-linked polyubiquitin chains of MAVS to inhibit its aggregation, essential for its activation. In Rattus norvegicus (Rat), this protein is Ubiquitin carboxyl-terminal hydrolase 10 (Usp10).